We begin with the raw amino-acid sequence, 179 residues long: Cell division protein SepF (179 aa).

Residues 22-55 form a disordered region; sequence LPYEKRDEPVFTSVNSSQEPALPMNQPSQSAGTK. Residues 33 to 55 show a composition bias toward polar residues; that stretch reads TSVNSSQEPALPMNQPSQSAGTK.

The protein belongs to the SepF family. In terms of assembly, homodimer. Interacts with FtsZ.

Its subcellular location is the cytoplasm. In terms of biological role, cell division protein that is part of the divisome complex and is recruited early to the Z-ring. Probably stimulates Z-ring formation, perhaps through the cross-linking of FtsZ protofilaments. Its function overlaps with FtsA. The sequence is that of Cell division protein SepF from Streptococcus pneumoniae (strain Taiwan19F-14).